Reading from the N-terminus, the 285-residue chain is Ribosomal RNA small subunit methyltransferase I (285 aa).

This sequence belongs to the methyltransferase superfamily. RsmI family.

The protein localises to the cytoplasm. The catalysed reaction is cytidine(1402) in 16S rRNA + S-adenosyl-L-methionine = 2'-O-methylcytidine(1402) in 16S rRNA + S-adenosyl-L-homocysteine + H(+). In terms of biological role, catalyzes the 2'-O-methylation of the ribose of cytidine 1402 (C1402) in 16S rRNA. The polypeptide is Ribosomal RNA small subunit methyltransferase I (Buchnera aphidicola subsp. Schizaphis graminum (strain Sg)).